The following is a 387-amino-acid chain: Xylose isomerase (387 aa).

Active-site residues include H53 and D56. Positions 180, 216, 219, 244, 254, 256, and 286 each coordinate Mg(2+).

Belongs to the xylose isomerase family. In terms of assembly, homotetramer. The cofactor is Mg(2+).

The protein localises to the cytoplasm. The enzyme catalyses alpha-D-xylose = alpha-D-xylulofuranose. The chain is Xylose isomerase (xylA) from Thermus caldophilus.